A 1560-amino-acid polypeptide reads, in one-letter code: BRD4-interacting chromatin-remodeling complex-associated protein (1560 aa).

6 disordered regions span residues 53 to 99 (VQEA…GADQ), 624 to 688 (APQA…ATPT), 723 to 949 (IVSA…VTTP), 974 to 1028 (NKAG…TGLP), 1049 to 1075 (KAAS…KPPT), and 1215 to 1300 (SSEG…IKTY). Residues 86 to 96 (ATGGGGGGSGG) show a composition bias toward gly residues. Residues 624 to 664 (APQAPPAVSTPLPLGLQQPQAQQPPQAPTPQAAAPPQATTP) are compositionally biased toward low complexity. The segment covering 726-736 (APPPAQDPAPA) has biased composition (pro residues). Residues 747–780 (PQAPDSQASPAPAPQIPAAAPLKGPGPSSSPSLP) show a composition bias toward low complexity. 3 stretches are compositionally biased toward pro residues: residues 791-806 (LPSP…PPSR), 814-831 (PSEP…PPTL), and 843-880 (VPPP…PHLP). A compositionally biased stretch (low complexity) spans 881–896 (PSSTSSAVASSSETSS). Residue S919 is modified to Phosphoserine. Position 921 is a phosphothreonine (T921). Residues 932–941 (PAAPPPPPPR) are compositionally biased toward pro residues. The span at 1005–1028 (APSGTPTAPSHAPAPAPMAATGLP) shows a compositional bias: low complexity. At K1057 the chain carries N6-acetyllysine. Over residues 1227–1236 (LSSSAPGAST) the composition is skewed to polar residues. The span at 1264-1281 (ASSSLSSSSSSSSAASSL) shows a compositional bias: low complexity. K1313 participates in a covalent cross-link: Glycyl lysine isopeptide (Lys-Gly) (interchain with G-Cter in SUMO2). 2 disordered regions span residues 1324-1424 (NTAL…VDEA) and 1440-1560 (YQRM…TLTR). Residues 1331 to 1356 (HQPPPPPATLKVAEPPPRPPPPPPPT) are compositionally biased toward pro residues. A compositionally biased stretch (low complexity) spans 1401–1412 (PEGTPAGRARGG). S1413 bears the Phosphoserine mark. Residues 1485–1515 (ASFSSDSPQDDTLTEHLQSAIDSILNLQQAP) are compositionally biased toward polar residues.

As to quaternary structure, component of the multiprotein chromatin-remodeling complexes SWI/SNF: SWI/SNF-A (BAF), SWI/SNF-B (PBAF) and related complexes. The canonical complex contains a catalytic subunit (either SMARCA4/BRG1/BAF190A or SMARCA2/BRM/BAF190B) and at least SMARCE1, ACTL6A/BAF53, SMARCC1/BAF155, SMARCC2/BAF170, and SMARCB1/SNF5/BAF47. Other subunits specific to each of the complexes may also be present permitting several possible combinations developmentally and tissue specific. Component of the SWI/SNF (GBAF) subcomplex, which includes at least BICRA or BICRAL (mutually exclusive), BRD9, SS18, the core BAF subunits, SMARCA2/BRM, SMARCA4/BRG1/BAF190A, ACTL6A/BAF53, SMARCC1/BAF155, and SMARCD1/BAF60A. Interacts with BRD4; the interaction bridges BRD4 to the GBAF complex. In terms of tissue distribution, expressed at moderate levels in heart, brain, placenta, skeletal muscle, and pancreas, and at lower levels in lung, liver and kidney.

The protein resides in the nucleus. In terms of biological role, component of SWI/SNF chromatin remodeling subcomplex GBAF that carries out key enzymatic activities, changing chromatin structure by altering DNA-histone contacts within a nucleosome in an ATP-dependent manner. May play a role in BRD4-mediated gene transcription. This chain is BRD4-interacting chromatin-remodeling complex-associated protein, found in Homo sapiens (Human).